We begin with the raw amino-acid sequence, 346 residues long: tRNA N6-adenosine threonylcarbamoyltransferase (346 aa).

Histidine 111 and histidine 115 together coordinate Fe cation. Substrate contacts are provided by residues 134–138, aspartate 167, glycine 180, and asparagine 279; that span reads LVSGG. Aspartate 307 is a binding site for Fe cation.

Belongs to the KAE1 / TsaD family. It depends on Fe(2+) as a cofactor.

Its subcellular location is the cytoplasm. The catalysed reaction is L-threonylcarbamoyladenylate + adenosine(37) in tRNA = N(6)-L-threonylcarbamoyladenosine(37) in tRNA + AMP + H(+). Its function is as follows. Required for the formation of a threonylcarbamoyl group on adenosine at position 37 (t(6)A37) in tRNAs that read codons beginning with adenine. Is involved in the transfer of the threonylcarbamoyl moiety of threonylcarbamoyl-AMP (TC-AMP) to the N6 group of A37, together with TsaE and TsaB. TsaD likely plays a direct catalytic role in this reaction. The sequence is that of tRNA N6-adenosine threonylcarbamoyltransferase from Burkholderia pseudomallei (strain K96243).